A 486-amino-acid chain; its full sequence is Uridine/cytidine kinase UKL1, chloroplastic (486 aa).

Residues 1 to 47 constitute a chloroplast transit peptide; sequence MPEDSSSLDYAMEKASGPHFSGLRFDGLLSSSPPNSSVVSSLRSAVS. Positions 31–54 are enriched in low complexity; it reads SSPPNSSVVSSLRSAVSSSSPSSS. The disordered stretch occupies residues 31–67; sequence SSPPNSSVVSSLRSAVSSSSPSSSDPEAPKQPFIIGV. Positions 59–264 are uridine kinase; it reads PKQPFIIGVS…ITQHIHTKLG (206 aa). Residues 274–486 form a uracil phosphoribosyltransferase region; that stretch reads NVYVIQSTFQ…RYFGTDEEDQ (213 aa). GTP-binding positions include K298, R307, and 341–344; that span reads CKKL. 5-phospho-alpha-D-ribose 1-diphosphate is bound by residues R351 and R376. R396 serves as a coordination point for GTP. 5-phospho-alpha-D-ribose 1-diphosphate is bound by residues D402, 407–410, and E473; that span reads TGNS. Residue 472 to 474 coordinates uracil; it reads GEF.

It in the N-terminal section; belongs to the uridine kinase family. This sequence in the C-terminal section; belongs to the UPRTase family. As to expression, expressed in roots, leaves and stems.

It is found in the plastid. Its subcellular location is the chloroplast. It localises to the cytoplasm. It carries out the reaction cytidine + ATP = CMP + ADP + H(+). The enzyme catalyses uridine + ATP = UMP + ADP + H(+). It participates in pyrimidine metabolism; CTP biosynthesis via salvage pathway; CTP from cytidine: step 1/3. The protein operates within pyrimidine metabolism; UMP biosynthesis via salvage pathway; UMP from uridine: step 1/1. In terms of biological role, involved in the pyrimidine salvage pathway. Phosphorylates uridine to uridine monophosphate (UMP). Phosphorylates cytidine to cytidine monophosphate (CMP). Does not possess uracil phosphoribosyltransferase (UPRTase) activity that catalyzes the conversion of uracil and 5-phospho-alpha-D-ribose 1-diphosphate (PRPP) to UMP and diphosphate. The sequence is that of Uridine/cytidine kinase UKL1, chloroplastic from Arabidopsis thaliana (Mouse-ear cress).